The sequence spans 374 residues: Protein RecA (374 aa).

66–73 (GPESSGKT) lines the ATP pocket. Residues 326–374 (KLGVGVHPEESATEPGADAASAAPADAAPAVPAPTTAKATKSKATAAKS) form a disordered region. Residues 338–374 (TEPGADAASAAPADAAPAVPAPTTAKATKSKATAAKS) are compositionally biased toward low complexity.

The protein belongs to the RecA family.

Its subcellular location is the cytoplasm. Functionally, can catalyze the hydrolysis of ATP in the presence of single-stranded DNA, the ATP-dependent uptake of single-stranded DNA by duplex DNA, and the ATP-dependent hybridization of homologous single-stranded DNAs. It interacts with LexA causing its activation and leading to its autocatalytic cleavage. The sequence is that of Protein RecA from Streptomyces coelicolor (strain ATCC BAA-471 / A3(2) / M145).